A 629-amino-acid chain; its full sequence is FAST kinase domain-containing protein 4 (629 aa).

Positions 559–617 (IAFLRWEFPNFNSRSKDLLGRFVLARRHVLAAGFLVVDVPYYEWLDLKSEWQKTAYLKD) constitute an RAP domain.

It belongs to the FAST kinase family.

It localises to the mitochondrion matrix. Its function is as follows. Plays a role in processing of mitochondrial RNA precursors and in stabilization of a subset of mature mitochondrial RNA species, such as MT-CO1, MT-CO2, MT-CYB, MT-CO3, MT-ND3, MT-ND5 and MT-ATP8/6. May play a role in cell cycle progression. The sequence is that of FAST kinase domain-containing protein 4 (Tbrg4) from Rattus norvegicus (Rat).